We begin with the raw amino-acid sequence, 352 residues long: Transcriptional regulatory protein AlgP (352 aa).

Residues 128–352 (KALESRKAKP…SNGAAPTSAS (225 aa)) form a disordered region. Residues 138–341 (ATKPAAKAAA…SSAASATPAA (204 aa)) show a composition bias toward low complexity.

In terms of biological role, the promoter for a critical alginate biosynthetic gene, AlgD, encoding GDP-mannose dehydrogenase, is activated only under conditions reminiscent of the cystic fibrosis lung (i.e. under high osmolarity), and at least two regulatory genes, AlgP and AlgQ, have been implicated in this activation process. The chain is Transcriptional regulatory protein AlgP (algP) from Pseudomonas aeruginosa (strain ATCC 15692 / DSM 22644 / CIP 104116 / JCM 14847 / LMG 12228 / 1C / PRS 101 / PAO1).